The primary structure comprises 230 residues: Ureidoacrylate amidohydrolase RutB (230 aa).

Asp24 acts as the Proton acceptor in catalysis. The active site involves Lys133. Residue Cys166 is the Nucleophile of the active site.

The protein belongs to the isochorismatase family. RutB subfamily.

The enzyme catalyses (Z)-3-ureidoacrylate + H2O + H(+) = (Z)-3-aminoacrylate + NH4(+) + CO2. It carries out the reaction (Z)-3-ureidoacrylate + H2O = (Z)-3-aminoacrylate + carbamate + H(+). It catalyses the reaction (Z)-2-methylureidoacrylate + H2O + H(+) = (Z)-2-methylaminoacrylate + NH4(+) + CO2. Functionally, hydrolyzes ureidoacrylate to form aminoacrylate and carbamate. The carbamate hydrolyzes spontaneously, thereby releasing one of the nitrogen atoms of the pyrimidine ring as ammonia and one of its carbon atoms as CO2. This is Ureidoacrylate amidohydrolase RutB from Escherichia coli O103:H2 (strain 12009 / EHEC).